We begin with the raw amino-acid sequence, 93 residues long: Integration host factor subunit beta (93 aa).

The protein belongs to the bacterial histone-like protein family. As to quaternary structure, heterodimer of an alpha and a beta chain.

In terms of biological role, this protein is one of the two subunits of integration host factor, a specific DNA-binding protein that functions in genetic recombination as well as in transcriptional and translational control. The polypeptide is Integration host factor subunit beta (Actinobacillus pleuropneumoniae serotype 7 (strain AP76)).